Here is a 441-residue protein sequence, read N- to C-terminus: Phosphoglucosamine mutase (441 aa).

Serine 100 serves as the catalytic Phosphoserine intermediate. Serine 100, aspartate 239, aspartate 241, and aspartate 243 together coordinate Mg(2+). A Phosphoserine modification is found at serine 100.

This sequence belongs to the phosphohexose mutase family. Mg(2+) serves as cofactor. Activated by phosphorylation.

The catalysed reaction is alpha-D-glucosamine 1-phosphate = D-glucosamine 6-phosphate. In terms of biological role, catalyzes the conversion of glucosamine-6-phosphate to glucosamine-1-phosphate. The polypeptide is Phosphoglucosamine mutase (Ruthia magnifica subsp. Calyptogena magnifica).